The primary structure comprises 312 residues: Glyoxylate/hydroxypyruvate reductase A (312 aa).

R227 is a catalytic residue. The Proton donor role is filled by H275.

Belongs to the D-isomer specific 2-hydroxyacid dehydrogenase family. GhrA subfamily.

It is found in the cytoplasm. The catalysed reaction is glycolate + NADP(+) = glyoxylate + NADPH + H(+). The enzyme catalyses (R)-glycerate + NAD(+) = 3-hydroxypyruvate + NADH + H(+). It catalyses the reaction (R)-glycerate + NADP(+) = 3-hydroxypyruvate + NADPH + H(+). In terms of biological role, catalyzes the NADPH-dependent reduction of glyoxylate and hydroxypyruvate into glycolate and glycerate, respectively. In Salmonella typhi, this protein is Glyoxylate/hydroxypyruvate reductase A.